Reading from the N-terminus, the 453-residue chain is Ribosomal protein uS12 methylthiotransferase RimO (453 aa).

The MTTase N-terminal domain occupies 5–120; that stretch reads PKVGFVSLGC…VMQAVHSHLP (116 aa). Residues cysteine 14, cysteine 50, cysteine 79, cysteine 151, cysteine 155, and cysteine 158 each contribute to the [4Fe-4S] cluster site. One can recognise a Radical SAM core domain in the interval 137 to 383; it reads LTPRHYAYLK…EVAEEVSAHR (247 aa). Residues 385-453 enclose the TRAM domain; the sequence is QRKVGKTLKV…ADGHDLWGEV (69 aa).

The protein belongs to the methylthiotransferase family. RimO subfamily. It depends on [4Fe-4S] cluster as a cofactor.

It is found in the cytoplasm. It carries out the reaction L-aspartate(89)-[ribosomal protein uS12]-hydrogen + (sulfur carrier)-SH + AH2 + 2 S-adenosyl-L-methionine = 3-methylsulfanyl-L-aspartate(89)-[ribosomal protein uS12]-hydrogen + (sulfur carrier)-H + 5'-deoxyadenosine + L-methionine + A + S-adenosyl-L-homocysteine + 2 H(+). Catalyzes the methylthiolation of an aspartic acid residue of ribosomal protein uS12. The chain is Ribosomal protein uS12 methylthiotransferase RimO from Burkholderia cenocepacia (strain ATCC BAA-245 / DSM 16553 / LMG 16656 / NCTC 13227 / J2315 / CF5610) (Burkholderia cepacia (strain J2315)).